The sequence spans 735 residues: Peroxisomal multifunctional enzyme type 2 (735 aa).

The tract at residues 1 to 305 is (3R)-hydroxyacyl-CoA dehydrogenase; the sequence is MASPLRFDGR…IEVLHKIDSE (305 aa). Residues 16–40, L21, and D40 each bind NAD(+); that span reads GAGG…VVND. The residue at position 46 (K46) is an N6-acetyllysine; alternate. Position 46 is an N6-succinyllysine; alternate (K46). S52 carries the phosphoserine modification. Residues K57 and K68 each carry the N6-succinyllysine modification. Residue 75–76 coordinates NAD(+); it reads SV. K84 bears the N6-succinyllysine mark. N99 is a binding site for NAD(+). A substrate-binding site is contributed by S151. The active-site Proton acceptor is the Y164. NAD(+)-binding positions include 164–168 and 196–199; these read YSAAK and AGSR. A Phosphothreonine modification is found at T265. K275 carries the N6-succinyllysine modification. 2 positions are modified to phosphoserine: S304 and S308. Residues 321 to 621 form an enoyl-CoA hydratase 2 region; sequence SGFAGVVGHK…AQTPSEGGAL (301 aa). K355 bears the N6-succinyllysine mark. 405-406 contacts (3R)-3-hydroxydecanoyl-CoA; the sequence is HG. K423 is modified (N6-succinyllysine). (3R)-3-hydroxydecanoyl-CoA contacts are provided by residues K434, 509 to 514, G532, and F562; that span reads DSNPLH. Positions 483–599 constitute a MaoC-like domain; sequence VPSRPPDAVL…QETGDIVISN (117 aa). K564 is subject to N6-acetyllysine. K578 and K662 each carry N6-succinyllysine. The region spanning 623–735 is the SCP2 domain; that stretch reads SALVFGEIGR…QMILKDYAKL (113 aa). At K668 the chain carries N6-acetyllysine. Substrate-binding residues include Q705 and Q723. K724 is subject to N6-succinyllysine. The short motif at 733-735 is the Microbody targeting signal element; sequence AKL.

This sequence belongs to the short-chain dehydrogenases/reductases (SDR) family. As to quaternary structure, homodimer.

The protein resides in the peroxisome. It carries out the reaction a (3R)-3-hydroxyacyl-CoA + NAD(+) = a 3-oxoacyl-CoA + NADH + H(+). It catalyses the reaction (24R,25R)-3alpha,7alpha,12alpha,24-tetrahydroxy-5beta-cholestan-26-oyl-CoA = (24E)-3alpha,7alpha,12alpha-trihydroxy-5beta-cholest-24-en-26-oyl-CoA + H2O. The enzyme catalyses a (3R)-3-hydroxyacyl-CoA = a (2E)-enoyl-CoA + H2O. The catalysed reaction is (2E)-octenoyl-CoA + H2O = (3R)-hydroxyoctanoyl-CoA. It carries out the reaction (3R)-hydroxyoctanoyl-CoA + NAD(+) = 3-oxooctanoyl-CoA + NADH + H(+). It catalyses the reaction (3R)-hydroxyhexadecanoyl-CoA + NAD(+) = 3-oxohexadecanoyl-CoA + NADH + H(+). The enzyme catalyses (2E)-hexadecenedioyl-CoA + H2O = (3R)-hydroxyhexadecanedioyl-CoA. The catalysed reaction is (3R)-hydroxyhexadecanedioyl-CoA + NAD(+) = 3-oxohexadecanedioyl-CoA + NADH + H(+). It carries out the reaction (3R)-hydroxyhexadecanoyl-CoA = (2E)-hexadecenoyl-CoA + H2O. It catalyses the reaction (3R)-3-hydroxydecanoyl-CoA = (2E)-decenoyl-CoA + H2O. The enzyme catalyses (3R)-3-hydroxydecanoyl-CoA + NAD(+) = 3-oxodecanoyl-CoA + NADH + H(+). The catalysed reaction is (24R,25R)-3alpha,7alpha,12alpha,24-tetrahydroxy-5beta-cholestan-26-oyl-CoA + NAD(+) = 3alpha,7alpha,12alpha-trihydroxy-24-oxo-5beta-cholestan-26-oyl-CoA + NADH + H(+). It participates in lipid metabolism; fatty acid beta-oxidation. In terms of biological role, bifunctional enzyme acting on the peroxisomal fatty acid beta-oxidation pathway. Catalyzes two of the four reactions in fatty acid degradation: hydration of 2-enoyl-CoA (trans-2-enoyl-CoA) to produce (3R)-3-hydroxyacyl-CoA, and dehydrogenation of (3R)-3-hydroxyacyl-CoA to produce 3-ketoacyl-CoA (3-oxoacyl-CoA), which is further metabolized by SCPx. Can use straight-chain and branched-chain fatty acids, as well as bile acid intermediates as substrates. This is Peroxisomal multifunctional enzyme type 2 from Rattus norvegicus (Rat).